The primary structure comprises 188 residues: Ribosome-recycling factor (188 aa).

The protein belongs to the RRF family.

It is found in the cytoplasm. Functionally, responsible for the release of ribosomes from messenger RNA at the termination of protein biosynthesis. May increase the efficiency of translation by recycling ribosomes from one round of translation to another. This is Ribosome-recycling factor from Cereibacter sphaeroides (strain ATCC 17023 / DSM 158 / JCM 6121 / CCUG 31486 / LMG 2827 / NBRC 12203 / NCIMB 8253 / ATH 2.4.1.) (Rhodobacter sphaeroides).